Here is a 79-residue protein sequence, read N- to C-terminus: Acyl carrier protein (79 aa).

The Carrier domain occupies 2–77 (SDIADKVKKI…DAIDYIEKQK (76 aa)). An O-(pantetheine 4'-phosphoryl)serine modification is found at serine 37.

This sequence belongs to the acyl carrier protein (ACP) family. 4'-phosphopantetheine is transferred from CoA to a specific serine of apo-ACP by AcpS. This modification is essential for activity because fatty acids are bound in thioester linkage to the sulfhydryl of the prosthetic group.

Its subcellular location is the cytoplasm. The protein operates within lipid metabolism; fatty acid biosynthesis. Functionally, carrier of the growing fatty acid chain in fatty acid biosynthesis. The polypeptide is Acyl carrier protein (Gluconobacter oxydans (strain 621H) (Gluconobacter suboxydans)).